The primary structure comprises 482 residues: Programmed cell death protein 7 (482 aa).

Disordered stretches follow at residues 1 to 136 (MALP…GDAA) and 151 to 170 (GNPRRPGGLRTPRTPAGPSL). Over residues 13-48 (GPPPPQPPPSAPFGCPPPPLPSPAFPPPLPQRPGPF) the composition is skewed to pro residues. Positions 49-71 (PGASAPFLQPPLALQPRAPAEAS) are enriched in low complexity. Pro residues-rich tracts occupy residues 82 to 100 (PVPPPPLPPPPPQCRPFPG) and 109 to 130 (PPPPGPGPPWSPRWAEAPPPPD). The segment covering 151-168 (GNPRRPGGLRTPRTPAGP) has biased composition (low complexity). Residues 233-408 (EARRRLERVR…LQKREIESKL (176 aa)) are a coiled coil.

In terms of assembly, interacts with RBM40. Component of the U11/U12 snRNPs that are part of the U12-type spliceosome. As to expression, highly expressed in testis, thymus and lymph nodes. Detected at low levels in embryonic stem cells.

The protein resides in the nucleus. In terms of biological role, promotes apoptosis when overexpressed. The polypeptide is Programmed cell death protein 7 (Pdcd7) (Mus musculus (Mouse)).